The sequence spans 1096 residues: Lysine-specific demethylase 4B (1096 aa).

In terms of domain architecture, JmjN spans Ile-15 to Arg-57. Tyr-133 provides a ligand contact to 2-oxoglutarate. The region spanning Val-146–Cys-309 is the JmjC domain. Residues His-189 and Glu-191 each coordinate Fe cation. 2-oxoglutarate is bound by residues Asn-199 and Lys-207. Zn(2+)-binding residues include Cys-235 and His-241. Lys-242 contacts 2-oxoglutarate. Fe cation is bound at residue His-277. Zn(2+) contacts are provided by Cys-307 and Cys-309. Residues Leu-369–Lys-382 show a composition bias toward basic residues. Disordered stretches follow at residues Leu-369–Ala-478 and Lys-557–Pro-649. A compositionally biased stretch (low complexity) spans Pro-391–Gly-406. Residues Gly-413–Pro-425 show a composition bias toward acidic residues. Over residues His-430–Gly-443 the composition is skewed to basic and acidic residues. Over residues Lys-444–Ser-458 the composition is skewed to basic residues. Position 566 is a phosphoserine (Ser-566). Lys-602 is modified (N6-acetyllysine). The segment covering Ser-632–Asp-648 has biased composition (acidic residues). The segment at Met-731–Ala-789 adopts a PHD-type 1 zinc-finger fold. The segment at Thr-794–Ala-827 adopts a C2HC pre-PHD-type zinc-finger fold. A PHD-type 2 zinc finger spans residues Leu-850 to Lys-907. Tudor domains lie at Arg-917–Leu-974 and Gly-975–Pro-1031. The tract at residues Arg-1037 to Gly-1073 is disordered. Thr-1065 is modified (phosphothreonine).

The protein belongs to the JHDM3 histone demethylase family. Fe(2+) serves as cofactor.

The protein localises to the nucleus. The enzyme catalyses N(6),N(6),N(6)-trimethyl-L-lysyl(9)-[histone H3] + 2 2-oxoglutarate + 2 O2 = N(6)-methyl-L-lysyl(9)-[histone H3] + 2 formaldehyde + 2 succinate + 2 CO2. In terms of biological role, histone demethylase that specifically demethylates 'Lys-9' of histone H3, thereby playing a role in histone code. Does not demethylate histone H3 'Lys-4', H3 'Lys-27', H3 'Lys-36' nor H4 'Lys-20'. Only able to demethylate trimethylated H3 'Lys-9', with a weaker activity than KDM4A, KDM4C and KDM4D. Demethylation of Lys residue generates formaldehyde and succinate. Plays a critical role in the development of the central nervous system (CNS). This chain is Lysine-specific demethylase 4B (KDM4B), found in Homo sapiens (Human).